A 428-amino-acid chain; its full sequence is Adenylosuccinate synthetase (428 aa).

Residues 12–18 (GDEGKGK) and 40–42 (GHT) each bind GTP. Residue Asp-13 is the Proton acceptor of the active site. The Mg(2+) site is built by Asp-13 and Gly-40. Residues 13-16 (DEGK), 38-41 (NAGH), Thr-128, Arg-142, Gln-223, Thr-238, and Arg-302 each bind IMP. His-41 (proton donor) is an active-site residue. 298 to 304 (VTTGRPR) serves as a coordination point for substrate. GTP-binding positions include Arg-304, 330–332 (KLD), and 412–414 (GTG).

This sequence belongs to the adenylosuccinate synthetase family. In terms of assembly, homodimer. It depends on Mg(2+) as a cofactor.

It is found in the cytoplasm. The enzyme catalyses IMP + L-aspartate + GTP = N(6)-(1,2-dicarboxyethyl)-AMP + GDP + phosphate + 2 H(+). It functions in the pathway purine metabolism; AMP biosynthesis via de novo pathway; AMP from IMP: step 1/2. In terms of biological role, plays an important role in the de novo pathway of purine nucleotide biosynthesis. Catalyzes the first committed step in the biosynthesis of AMP from IMP. This is Adenylosuccinate synthetase from Bifidobacterium animalis subsp. lactis (strain AD011).